A 158-amino-acid chain; its full sequence is C-type natriuretic peptide 3 (158 aa).

The signal sequence occupies residues 1-21; the sequence is MSLNLPGYALFFILLVASSGA. A propeptide spanning residues 22–136 is cleaved from the precursor; it reads KPAPDLQILE…SKRSRSRYKK (115 aa). The segment at 32 to 95 is disordered; that stretch reads PPLSSLEEQE…EVQERGRGTG (64 aa). The span at 47–64 shows a compositional bias: basic and acidic residues; that stretch reads VQEKVQEQQEEVQEKVQE. The span at 65–86 shows a compositional bias: acidic residues; it reads QQEEVQEQQEEVQEQQEEQQEE. Cys-142 and Cys-158 are disulfide-bonded.

It belongs to the natriuretic peptide family.

It is found in the secreted. In terms of biological role, exhibits natriuretic and vasodepressant activity. Has cGMP-stimulating activity. May help to regulate body fluid homeostasis in a variety of aquatic environments. This chain is C-type natriuretic peptide 3, found in Takifugu rubripes (Japanese pufferfish).